A 223-amino-acid chain; its full sequence is 2-phospho-L-lactate guanylyltransferase (223 aa).

It belongs to the CofC family. Homodimer.

The enzyme catalyses (2S)-2-phospholactate + GTP + H(+) = (2S)-lactyl-2-diphospho-5'-guanosine + diphosphate. Its pathway is cofactor biosynthesis; coenzyme F420 biosynthesis. Guanylyltransferase that catalyzes the activation of (2S)-2-phospholactate (2-PL) as (2S)-lactyl-2-diphospho-5'-guanosine, via the condensation of 2-PL with GTP. It is involved in the biosynthesis of coenzyme F420, a hydride carrier cofactor. This Methanothermobacter thermautotrophicus (strain ATCC 29096 / DSM 1053 / JCM 10044 / NBRC 100330 / Delta H) (Methanobacterium thermoautotrophicum) protein is 2-phospho-L-lactate guanylyltransferase.